Here is a 61-residue protein sequence, read N- to C-terminus: Pleurocidin-like peptide WF3 (61 aa).

A signal peptide spans 1 to 22 (MKFTATFLVLSLVVLMAEPGEC). Residues 48–61 (YDEQQELNKRAVDE) constitute a propeptide that is removed on maturation.

It belongs to the pleurocidin family.

It is found in the secreted. Functionally, antimicrobial peptide. This Pseudopleuronectes americanus (Winter flounder) protein is Pleurocidin-like peptide WF3 (ple3).